The primary structure comprises 137 residues: Large ribosomal subunit protein uL16 (137 aa).

It belongs to the universal ribosomal protein uL16 family. Part of the 50S ribosomal subunit.

Binds 23S rRNA and is also seen to make contacts with the A and possibly P site tRNAs. The protein is Large ribosomal subunit protein uL16 of Cereibacter sphaeroides (strain ATCC 17025 / ATH 2.4.3) (Rhodobacter sphaeroides).